The sequence spans 427 residues: Trigger factor (427 aa).

The 86-residue stretch at 163 to 248 (GDTVVIDFVG…IHEVKAKEVP (86 aa)) folds into the PPIase FKBP-type domain.

This sequence belongs to the FKBP-type PPIase family. Tig subfamily.

Its subcellular location is the cytoplasm. It catalyses the reaction [protein]-peptidylproline (omega=180) = [protein]-peptidylproline (omega=0). Involved in protein export. Acts as a chaperone by maintaining the newly synthesized protein in an open conformation. Functions as a peptidyl-prolyl cis-trans isomerase. This chain is Trigger factor, found in Streptococcus suis (strain 98HAH33).